The sequence spans 255 residues: tRNA1(Val) (adenine(37)-N6)-methyltransferase (255 aa).

Belongs to the methyltransferase superfamily. tRNA (adenine-N(6)-)-methyltransferase family.

The protein resides in the cytoplasm. It carries out the reaction adenosine(37) in tRNA1(Val) + S-adenosyl-L-methionine = N(6)-methyladenosine(37) in tRNA1(Val) + S-adenosyl-L-homocysteine + H(+). Functionally, specifically methylates the adenine in position 37 of tRNA(1)(Val) (anticodon cmo5UAC). The protein is tRNA1(Val) (adenine(37)-N6)-methyltransferase of Porphyromonas gingivalis (strain ATCC 33277 / DSM 20709 / CIP 103683 / JCM 12257 / NCTC 11834 / 2561).